Reading from the N-terminus, the 492-residue chain is 3-octaprenyl-4-hydroxybenzoate carboxy-lyase (492 aa).

Asn175 serves as a coordination point for Mn(2+). Prenylated FMN contacts are provided by residues 178 to 180 (IYR), 192 to 194 (RWL), and 197 to 198 (RG). Mn(2+) is bound at residue Glu241. Residue Asp290 is the Proton donor of the active site.

This sequence belongs to the UbiD family. As to quaternary structure, homohexamer. Requires prenylated FMN as cofactor. Mn(2+) is required as a cofactor.

It is found in the cell membrane. It carries out the reaction a 4-hydroxy-3-(all-trans-polyprenyl)benzoate + H(+) = a 2-(all-trans-polyprenyl)phenol + CO2. It functions in the pathway cofactor biosynthesis; ubiquinone biosynthesis. Functionally, catalyzes the decarboxylation of 3-octaprenyl-4-hydroxy benzoate to 2-octaprenylphenol, an intermediate step in ubiquinone biosynthesis. This chain is 3-octaprenyl-4-hydroxybenzoate carboxy-lyase, found in Salmonella choleraesuis (strain SC-B67).